The sequence spans 208 residues: Ribosomal RNA large subunit methyltransferase E (208 aa).

S-adenosyl-L-methionine-binding residues include G61, W63, D81, D97, and D122. Catalysis depends on K162, which acts as the Proton acceptor.

This sequence belongs to the class I-like SAM-binding methyltransferase superfamily. RNA methyltransferase RlmE family.

The protein localises to the cytoplasm. The enzyme catalyses uridine(2552) in 23S rRNA + S-adenosyl-L-methionine = 2'-O-methyluridine(2552) in 23S rRNA + S-adenosyl-L-homocysteine + H(+). Functionally, specifically methylates the uridine in position 2552 of 23S rRNA at the 2'-O position of the ribose in the fully assembled 50S ribosomal subunit. The protein is Ribosomal RNA large subunit methyltransferase E of Pseudomonas putida (strain GB-1).